Here is a 474-residue protein sequence, read N- to C-terminus: uncharacterized protein (474 aa).

Residues 3 to 23 (LTLWLVLGAVGVGAVGTGVGF) traverse the membrane as a helical segment. The disordered stretch occupies residues 171–296 (VSDGSSSKTR…KETKDRTKVD (126 aa)). Residues 180–210 (RTPKKTKTSKKKPIKKKSSKSKSSKGSKKQK) are compositionally biased toward basic residues. Over residues 231–253 (TRSQSKQQKGQEQATDQTDSEGV) the composition is skewed to polar residues. Residues 257–266 (EGADNTDTEL) are compositionally biased toward acidic residues. Residues 267 to 281 (VETTAETTEQEATTK) are compositionally biased toward low complexity. A compositionally biased stretch (basic and acidic residues) spans 282–296 (STKDTKETKDRTKVD).

The protein localises to the membrane. This is an uncharacterized protein from Mycoplasma pneumoniae (strain ATCC 29342 / M129 / Subtype 1) (Mycoplasmoides pneumoniae).